The following is a 284-amino-acid chain: MKNNFSKYQGLGNDFIIFDARSNNLDHLFSKNKDNFIEHLCNRNFGIGADGIILILESNNKCFVRMKIYNSDGSEPEMCGNGIRCLIAFLNDNNEINELSEIPIETKAGLILTYIDGNENIKVNMGEPILSPLDIPTKLLMNSLKVPNGVITLKDQILNVYAASMGNPHMIVFVNDIEGIPFQEWGSFLEKHNTFPNDTNVHFVEIIDKSNIKVKVWERGCGPTLACGTGACACLVVTSKLGKTLNNANVYLPGGKLEVEWPNQSGPVFMQGPALKVFSGEIDI.

Residues Asn-13 and Asn-70 each coordinate substrate. Cys-79 acts as the Proton donor in catalysis. Substrate is bound by residues 80-81 (GN), Asn-167, Asn-200, and 218-219 (ER). Cys-227 serves as the catalytic Proton acceptor. Residue 228–229 (GT) participates in substrate binding.

It belongs to the diaminopimelate epimerase family. As to quaternary structure, homodimer.

It is found in the cytoplasm. It catalyses the reaction (2S,6S)-2,6-diaminopimelate = meso-2,6-diaminopimelate. Its pathway is amino-acid biosynthesis; L-lysine biosynthesis via DAP pathway; DL-2,6-diaminopimelate from LL-2,6-diaminopimelate: step 1/1. In terms of biological role, catalyzes the stereoinversion of LL-2,6-diaminopimelate (L,L-DAP) to meso-diaminopimelate (meso-DAP), a precursor of L-lysine and an essential component of the bacterial peptidoglycan. This Prochlorococcus marinus (strain NATL2A) protein is Diaminopimelate epimerase.